The primary structure comprises 221 residues: Protein-L-isoaspartate O-methyltransferase (221 aa).

Residue S70 is part of the active site.

This sequence belongs to the methyltransferase superfamily. L-isoaspartyl/D-aspartyl protein methyltransferase family.

It is found in the cytoplasm. The catalysed reaction is [protein]-L-isoaspartate + S-adenosyl-L-methionine = [protein]-L-isoaspartate alpha-methyl ester + S-adenosyl-L-homocysteine. Functionally, catalyzes the methyl esterification of L-isoaspartyl residues in peptides and proteins that result from spontaneous decomposition of normal L-aspartyl and L-asparaginyl residues. It plays a role in the repair and/or degradation of damaged proteins. This chain is Protein-L-isoaspartate O-methyltransferase, found in Alkalilimnicola ehrlichii (strain ATCC BAA-1101 / DSM 17681 / MLHE-1).